The following is a 306-amino-acid chain: Ciliary microtubule inner protein 2B (306 aa).

The tract at residues 61–92 (QSNPFPPPRDHSFDGGSQELGGRRQHPGDPNL) is disordered.

The protein belongs to the CIMIP2 family. Expressed in airway epithelial cells.

The protein localises to the cytoplasm. Its subcellular location is the cytoskeleton. The protein resides in the cilium axoneme. Functionally, microtubule inner protein (MIP) part of the dynein-decorated doublet microtubules (DMTs) in cilia axoneme, which is required for motile cilia beating. The polypeptide is Ciliary microtubule inner protein 2B (cimip2b) (Xenopus tropicalis (Western clawed frog)).